The chain runs to 239 residues: ATP-dependent dethiobiotin synthetase BioD (239 aa).

Residue E15 to F20 coordinates ATP. T19 is a binding site for Mg(2+). The active site involves K40. Residues D57, E118–G121, and N178–H179 contribute to the ATP site. Residues D57 and E118 each contribute to the Mg(2+) site.

This sequence belongs to the dethiobiotin synthetase family. As to quaternary structure, homodimer. It depends on Mg(2+) as a cofactor.

The protein localises to the cytoplasm. The catalysed reaction is (7R,8S)-7,8-diammoniononanoate + CO2 + ATP = (4R,5S)-dethiobiotin + ADP + phosphate + 3 H(+). The protein operates within cofactor biosynthesis; biotin biosynthesis; biotin from 7,8-diaminononanoate: step 1/2. Its function is as follows. Catalyzes a mechanistically unusual reaction, the ATP-dependent insertion of CO2 between the N7 and N8 nitrogen atoms of 7,8-diaminopelargonic acid (DAPA, also called 7,8-diammoniononanoate) to form a ureido ring. This is ATP-dependent dethiobiotin synthetase BioD from Burkholderia orbicola (strain MC0-3).